Reading from the N-terminus, the 156-residue chain is Arginine repressor (156 aa).

The protein belongs to the ArgR family.

The protein resides in the cytoplasm. Its pathway is amino-acid biosynthesis; L-arginine biosynthesis [regulation]. Its function is as follows. Regulates arginine biosynthesis genes. This Photorhabdus laumondii subsp. laumondii (strain DSM 15139 / CIP 105565 / TT01) (Photorhabdus luminescens subsp. laumondii) protein is Arginine repressor.